Here is a 216-residue protein sequence, read N- to C-terminus: MGQKVNPNGFRYGITKPINSVWFAEKQNYGDLLVQDAKIYKFFDKLVRKYQIGNTSIKRTKAQKVTVVLQTSQPAKLLGENGANIEKITQDLHKYLKNKSLDINLQVSLLKQPELNARLAAEAIAQKLENRESFRVAQKLVINDALRAGAKGIKTQVSGRLNGVDMARAEGYSSGEMRLHTLRQDVDFAKATARTIYGAIGVKVWISKGELLEGDK.

Residues 39–111 (IYKFFDKLVR…DINLQVSLLK (73 aa)) form the KH type-2 domain.

The protein belongs to the universal ribosomal protein uS3 family. In terms of assembly, part of the 30S ribosomal subunit. Forms a tight complex with proteins S10 and S14.

Its function is as follows. Binds the lower part of the 30S subunit head. Binds mRNA in the 70S ribosome, positioning it for translation. This is Small ribosomal subunit protein uS3 from Mycoplasmopsis agalactiae (strain NCTC 10123 / CIP 59.7 / PG2) (Mycoplasma agalactiae).